A 185-amino-acid polypeptide reads, in one-letter code: Ribosome-recycling factor (185 aa).

This sequence belongs to the RRF family.

It localises to the cytoplasm. In terms of biological role, responsible for the release of ribosomes from messenger RNA at the termination of protein biosynthesis. May increase the efficiency of translation by recycling ribosomes from one round of translation to another. This Aeromonas salmonicida (strain A449) protein is Ribosome-recycling factor.